A 201-amino-acid polypeptide reads, in one-letter code: Molybdenum cofactor guanylyltransferase (201 aa).

GTP is bound by residues 15–17, Lys-28, Asp-74, and Asp-104; that span reads LAG. Position 104 (Asp-104) interacts with Mg(2+).

The protein belongs to the MobA family. Monomer. Mg(2+) serves as cofactor.

The protein localises to the cytoplasm. It carries out the reaction Mo-molybdopterin + GTP + H(+) = Mo-molybdopterin guanine dinucleotide + diphosphate. Functionally, transfers a GMP moiety from GTP to Mo-molybdopterin (Mo-MPT) cofactor (Moco or molybdenum cofactor) to form Mo-molybdopterin guanine dinucleotide (Mo-MGD) cofactor. This Pseudomonas syringae pv. tomato (strain ATCC BAA-871 / DC3000) protein is Molybdenum cofactor guanylyltransferase.